The following is a 295-amino-acid chain: Ribosomal protein L11 methyltransferase (295 aa).

S-adenosyl-L-methionine contacts are provided by Thr150, Gly171, Asp193, and Asn232.

Belongs to the methyltransferase superfamily. PrmA family.

Its subcellular location is the cytoplasm. The catalysed reaction is L-lysyl-[protein] + 3 S-adenosyl-L-methionine = N(6),N(6),N(6)-trimethyl-L-lysyl-[protein] + 3 S-adenosyl-L-homocysteine + 3 H(+). Functionally, methylates ribosomal protein L11. The chain is Ribosomal protein L11 methyltransferase from Neisseria meningitidis serogroup B (strain ATCC BAA-335 / MC58).